We begin with the raw amino-acid sequence, 130 residues long: Arsenate reductase 2.2 (130 aa).

Positions 18–119 (RDPRIAVVDV…WELSGRPVCR (102 aa)) constitute a Rhodanese domain. C70 (cysteine persulfide intermediate) is an active-site residue.

The enzyme catalyses [glutaredoxin]-dithiol + arsenate + glutathione + H(+) = glutathionyl-S-S-[glutaredoxin] + arsenite + H2O. Its function is as follows. Possesses arsenate reductase activity in vitro. Catalyzes the reduction of arsenate [As(V)] to arsenite [As(III)]. May play a role in arsenic retention in roots. Possesses phosphatase activity towards p-nitrophenyl phosphate in vitro. The chain is Arsenate reductase 2.2 (ACR2.2) from Oryza sativa subsp. japonica (Rice).